A 90-amino-acid polypeptide reads, in one-letter code: Putative antitoxin VapB8 (90 aa).

The segment at 1–56 is disordered; it reads MEKSRCHAVAHGGGCAGSAKSHKSGGRCGQGRGAGDSHGTRGAGRRYRAASAPHPL. A compositionally biased stretch (gly residues) spans 26-36; that stretch reads GRCGQGRGAGD.

In terms of biological role, antitoxin component of a possible type II toxin-antitoxin (TA) system. The cognate toxin is VapC8. The chain is Putative antitoxin VapB8 (vapB8) from Mycobacterium tuberculosis (strain ATCC 25618 / H37Rv).